We begin with the raw amino-acid sequence, 787 residues long: Ribonucleoside-diphosphate reductase large subunit (787 aa).

Substrate is bound by residues Thr209, 224–225 (SC), Gly255, 436–440 (NLCTE), and 618–622 (PTVSS). A disulfide bridge connects residues Cys225 and Cys453. The Proton acceptor role is filled by Asn436. Cys438 acts as the Cysteine radical intermediate in catalysis. Glu440 functions as the Proton acceptor in the catalytic mechanism.

The protein belongs to the ribonucleoside diphosphate reductase large chain family. As to quaternary structure, heterotetramer composed of a homodimer of the large subunit (R1) and a homodimer of the small subunit (R2). Larger multisubunit protein complex are also active, composed of (R1)n(R2)n.

It carries out the reaction a 2'-deoxyribonucleoside 5'-diphosphate + [thioredoxin]-disulfide + H2O = a ribonucleoside 5'-diphosphate + [thioredoxin]-dithiol. Its function is as follows. Ribonucleoside-diphosphate reductase holoenzyme provides the precursors necessary for viral DNA synthesis. Allows virus growth in non-dividing cells, as well as reactivation from latency in infected hosts. Catalyzes the biosynthesis of deoxyribonucleotides from the corresponding ribonucleotides. This Bos taurus (Bovine) protein is Ribonucleoside-diphosphate reductase large subunit.